Reading from the N-terminus, the 182-residue chain is Interferon beta (182 aa).

An N-terminal signal peptide occupies residues 1 to 21; it reads MNNRWILHAAFLLCFSTTALS. Phosphotyrosine is present on tyrosine 24. N-linked (GlcNAc...) asparagine glycosylation is found at asparagine 50, asparagine 90, and asparagine 97.

This sequence belongs to the alpha/beta interferon family. Monomer. This beta interferon does not have a disulfide bond.

It localises to the secreted. Its function is as follows. Type I interferon cytokine that plays a key role in the innate immune response to infection, developing tumors and other inflammatory stimuli. Signals via binding to high-affinity (IFNAR2) and low-affinity (IFNAR1) heterodimeric receptor, activating the canonical Jak-STAT signaling pathway resulting in transcriptional activation or repression of interferon-regulated genes that encode the effectors of the interferon response, such as antiviral proteins, regulators of cell proliferation and differentiation, and immunoregulatory proteins. Signals mostly via binding to a IFNAR1-IFNAR2 heterodimeric receptor, but can also function with IFNAR1 alone and independently of Jak-STAT pathways. Elicits a wide variety of responses, including antiviral and antibacterial activities, and can regulate the development of B-cells, myelopoiesis and lipopolysaccharide (LPS)-inducible production of tumor necrosis factor. Plays a role in neuronal homeostasis by regulating dopamine turnover and protecting dopaminergic neurons: acts by promoting neuronal autophagy and alpha-synuclein clearance, thereby preventing dopaminergic neuron loss. IFNB1 is more potent than interferon-alpha (IFN-alpha) in inducing the apoptotic and antiproliferative pathways required for control of tumor cell growth. The sequence is that of Interferon beta from Mus musculus (Mouse).